Consider the following 172-residue polypeptide: ATP synthase subunit b (172 aa).

Residues 12-32 (SLYIGDLVFYIVTFIILMLLV) traverse the membrane as a helical segment. Composition is skewed to basic and acidic residues over residues 63–74 (ESAEKMAAKRQA) and 116–131 (AQKD…LNSA). The interval 63–131 (ESAEKMAAKR…QARRDALNSA (69 aa)) is disordered.

It belongs to the ATPase B chain family. F-type ATPases have 2 components, F(1) - the catalytic core - and F(0) - the membrane proton channel. F(1) has five subunits: alpha(3), beta(3), gamma(1), delta(1), epsilon(1). F(0) has three main subunits: a(1), b(2) and c(10-14). The alpha and beta chains form an alternating ring which encloses part of the gamma chain. F(1) is attached to F(0) by a central stalk formed by the gamma and epsilon chains, while a peripheral stalk is formed by the delta and b chains.

It localises to the cell membrane. F(1)F(0) ATP synthase produces ATP from ADP in the presence of a proton or sodium gradient. F-type ATPases consist of two structural domains, F(1) containing the extramembraneous catalytic core and F(0) containing the membrane proton channel, linked together by a central stalk and a peripheral stalk. During catalysis, ATP synthesis in the catalytic domain of F(1) is coupled via a rotary mechanism of the central stalk subunits to proton translocation. In terms of biological role, component of the F(0) channel, it forms part of the peripheral stalk, linking F(1) to F(0). This Limosilactobacillus reuteri (strain DSM 20016) (Lactobacillus reuteri) protein is ATP synthase subunit b.